A 374-amino-acid polypeptide reads, in one-letter code: Muconate cycloisomerase 1 (374 aa).

The protein belongs to the cycloisomerase 2 family. Homotetramer.

The enzyme catalyses (S)-muconolactone = cis,cis-muconate + H(+). It participates in aromatic compound metabolism; beta-ketoadipate pathway; 5-oxo-4,5-dihydro-2-furylacetate from catechol: step 2/3. Its function is as follows. Catalyzes a syn cycloisomerization. The protein is Muconate cycloisomerase 1 of Cutaneotrichosporon cutaneum (Yeast).